The primary structure comprises 289 residues: ATP synthase gamma chain (289 aa).

This sequence belongs to the ATPase gamma chain family. As to quaternary structure, F-type ATPases have 2 components, CF(1) - the catalytic core - and CF(0) - the membrane proton channel. CF(1) has five subunits: alpha(3), beta(3), gamma(1), delta(1), epsilon(1). CF(0) has three main subunits: a, b and c.

It localises to the cell inner membrane. In terms of biological role, produces ATP from ADP in the presence of a proton gradient across the membrane. The gamma chain is believed to be important in regulating ATPase activity and the flow of protons through the CF(0) complex. This is ATP synthase gamma chain from Azobacteroides pseudotrichonymphae genomovar. CFP2.